Reading from the N-terminus, the 260-residue chain is 5'-nucleotidase SurE (260 aa).

4 residues coordinate a divalent metal cation: Asp19, Asp20, Ser51, and Asn104.

The protein belongs to the SurE nucleotidase family. A divalent metal cation serves as cofactor.

The protein localises to the cytoplasm. The enzyme catalyses a ribonucleoside 5'-phosphate + H2O = a ribonucleoside + phosphate. Functionally, nucleotidase that shows phosphatase activity on nucleoside 5'-monophosphates. This Paramagnetospirillum magneticum (strain ATCC 700264 / AMB-1) (Magnetospirillum magneticum) protein is 5'-nucleotidase SurE.